The primary structure comprises 956 residues: Calsyntenin-3 (956 aa).

Residues 1 to 20 form the signal peptide; the sequence is MARMSFLSFLLFCLTSVAHG. Topologically, residues 21-850 are extracellular; it reads NKANKHKPWI…PHRNSVVPGA (830 aa). Cadherin domains lie at 30–151 and 152–271; these read IETE…SPVF and VERR…IPLF. N-linked (GlcNAc...) asparagine glycosylation is found at Asn-333, Asn-353, Asn-513, and Asn-743. A helical membrane pass occupies residues 851–871; it reads ATVIIMVCVGFLVVMVILGVF. The Cytoplasmic portion of the chain corresponds to 872–956; sequence RIRSIHRRGE…EGRDSAPRRY (85 aa). Over residues 921-937 the composition is skewed to acidic residues; that stretch reads GECEDEEEVVDSPDDTS. Residues 921–956 are disordered; sequence GECEDEEEVVDSPDDTSDDQRIIIKKEGRDSAPRRY. The span at 938 to 956 shows a compositional bias: basic and acidic residues; sequence DDQRIIIKKEGRDSAPRRY.

This sequence belongs to the calsyntenin family. Homooligomer and heterooligomer; mediates both homophilic and heterophilc interactions with clstn1 and clstn2 paralogs via cadherin domains. Interacts (via cadherin domains) with both alpha and beta isoforms of neurexins. By 48 hours post-fertilization (hpf), widely expressed in the brain, with strong expression in the telencephalon and the midbrain. Not expressed in the optic tectum.

The protein localises to the postsynaptic cell membrane. Its subcellular location is the endoplasmic reticulum membrane. It localises to the golgi apparatus membrane. Its function is as follows. Synaptic adhesion molecule. Promotes synapse development by acting as a cell adhesion molecule at the postsynaptic membrane, which associates with presynaptic neurexins. The polypeptide is Calsyntenin-3 (Danio rerio (Zebrafish)).